We begin with the raw amino-acid sequence, 207 residues long: ATP synthase subunit b 2 (207 aa).

Residues 58 to 78 (LLWLVITFGVFYLLMQKVIAP) form a helical membrane-spanning segment.

It belongs to the ATPase B chain family. As to quaternary structure, F-type ATPases have 2 components, F(1) - the catalytic core - and F(0) - the membrane proton channel. F(1) has five subunits: alpha(3), beta(3), gamma(1), delta(1), epsilon(1). F(0) has three main subunits: a(1), b(2) and c(10-14). The alpha and beta chains form an alternating ring which encloses part of the gamma chain. F(1) is attached to F(0) by a central stalk formed by the gamma and epsilon chains, while a peripheral stalk is formed by the delta and b chains.

The protein resides in the cell inner membrane. Functionally, f(1)F(0) ATP synthase produces ATP from ADP in the presence of a proton or sodium gradient. F-type ATPases consist of two structural domains, F(1) containing the extramembraneous catalytic core and F(0) containing the membrane proton channel, linked together by a central stalk and a peripheral stalk. During catalysis, ATP synthesis in the catalytic domain of F(1) is coupled via a rotary mechanism of the central stalk subunits to proton translocation. Component of the F(0) channel, it forms part of the peripheral stalk, linking F(1) to F(0). The b'-subunit is a diverged and duplicated form of b found in plants and photosynthetic bacteria. The protein is ATP synthase subunit b 2 (atpF2) of Rhizobium johnstonii (strain DSM 114642 / LMG 32736 / 3841) (Rhizobium leguminosarum bv. viciae).